Reading from the N-terminus, the 222-residue chain is Glutathione S-transferase alpha M14 (222 aa).

Methionine 1 carries the post-translational modification N-acetylmethionine. N-acetylalanine; in Glutathione S-transferase alpha M14, N-terminally processed is present on alanine 2. Positions 3–83 constitute a GST N-terminal domain; the sequence is GKPILHYFNG…YIATKYNLYG (81 aa). Position 4 is an N6-succinyllysine (lysine 4). Glutathione contacts are provided by residues tyrosine 9, 54-55, and 67-68; these read QV and QT. The GST C-terminal domain occupies 85 to 208; the sequence is DAKERALIDM…QPGSQRKPPM (124 aa). Residues 199–222 form a disordered region; that stretch reads QPGSQRKPPMDAKKIRRSQEYFPD. The segment covering 206–222 has biased composition (basic and acidic residues); the sequence is PPMDAKKIRRSQEYFPD.

This sequence belongs to the GST superfamily. Alpha family. As to quaternary structure, homodimer or heterodimer of GSTA1 and GSTA2.

It localises to the cytoplasm. The catalysed reaction is RX + glutathione = an S-substituted glutathione + a halide anion + H(+). It carries out the reaction prostaglandin A2 + glutathione = prostaglandin A2-S-(R)-glutathione. The enzyme catalyses prostaglandin J2 + glutathione = prostaglandin J2-S-(R)-glutathione. It catalyses the reaction (13S)-hydroperoxy-(9Z,11E)-octadecadienoate + 2 glutathione = (13S)-hydroxy-(9Z,11E)-octadecadienoate + glutathione disulfide + H2O. The catalysed reaction is androst-5-ene-3,17-dione = androst-4-ene-3,17-dione. In terms of biological role, glutathione S-transferase that catalyzes the nucleophilic attack of the sulfur atom of glutathione on the electrophilic groups of a wide range of exogenous and endogenous compounds. Involved in the formation of glutathione conjugates of both prostaglandin A2 (PGA2) and prostaglandin J2 (PGJ2). It also catalyzes the isomerization of D5-androstene-3,17-dione (AD) into D4-androstene-3,17-dione and may therefore play an important role in hormone biosynthesis. Through its glutathione-dependent peroxidase activity toward the fatty acid hydroperoxide (13S)-hydroperoxy-(9Z,11E)-octadecadienoate/13-HPODE it is also involved in the metabolism of oxidized linoleic acid. The chain is Glutathione S-transferase alpha M14 from Sus scrofa (Pig).